Reading from the N-terminus, the 311-residue chain is MSSEQAAAMGRVAVLMGGDSAEREISLISGRAVFEALRRRGVDAEAVDTAQVALAELTGFDRAFIALHGRGGEDGVIQGALEALGVPYTGSGVLGCAIGMDKWRTKLLWRGAELPVPPGALLRPETNRQALIGSVGLPLMIKPAHEGSSIGMAKVERPEELEAARAEAARYDDLVLAERWIEGGEYTVAILGEEALPAIRLETPRGFYDFEAKYRSGDTRYHCPAGLTEAEEQQIRQLALDAFRVAGASGWGRVDFMRDRQGRFWLLEINTIPGMTDHSLVPMAARAVGIDFDELCWRILLDSRRREAGRP.

The ATP-grasp domain maps to 106–301; that stretch reads KLLWRGAELP…FDELCWRILL (196 aa). ATP is bound at residue 132–187; sequence IGSVGLPLMIKPAHEGSSIGMAKVERPEELEAARAEAARYDDLVLAERWIEGGEYT. Positions 255, 268, and 270 each coordinate Mg(2+).

This sequence belongs to the D-alanine--D-alanine ligase family. Mg(2+) is required as a cofactor. Mn(2+) serves as cofactor.

Its subcellular location is the cytoplasm. It catalyses the reaction 2 D-alanine + ATP = D-alanyl-D-alanine + ADP + phosphate + H(+). The protein operates within cell wall biogenesis; peptidoglycan biosynthesis. Its function is as follows. Cell wall formation. This chain is D-alanine--D-alanine ligase, found in Alkalilimnicola ehrlichii (strain ATCC BAA-1101 / DSM 17681 / MLHE-1).